We begin with the raw amino-acid sequence, 348 residues long: MDLAANEISIYDKLSETVDLVRQTGHQCGMSEKAIEKFIRQLLEKNEPQRGPPQYPLLIAVYKVLLTLGLILFTAYFVIQPFSSLAPEPVLSGANSWRSLVHHIRLVSLPITKKYMPENKGVPLQGSQEDKPFPDFDPWSSYNCEQNESEPIPANCTGCAQILPLKVTLPEDTPKNFERLRPLVIKTGQPLSSAEIQSFSCQYPEVTEGFTEGFFTKWWRCFPERWFPFPYPWRRPLNRSQILRELFPVFTQLPFPKDSSLNKCFLIQPEPVVGSKMHKVHDLFTLGSGEAMLQLIPPFQCRTHCQSVAMPIESGDIGYADAAHWKVYIVARGVQPLVICDGTTLSDL.

At 1–58 the chain is on the cytoplasmic side; the sequence is MDLAANEISIYDKLSETVDLVRQTGHQCGMSEKAIEKFIRQLLEKNEPQRGPPQYPLL. Residues 59–79 form a helical membrane-spanning segment; the sequence is IAVYKVLLTLGLILFTAYFVI. Topologically, residues 80-348 are extracellular; it reads QPFSSLAPEP…ICDGTTLSDL (269 aa).

Homodimer. Interacts with BRS3. Interacts (via N-terminus) with SIN3B. Glycosylated.

It is found in the golgi apparatus membrane. It localises to the cytoplasm. Its function is as follows. Exhibits histone deacetylase (HDAC) enhancer properties. May play a role in cell cycle progression and wound repair of bronchial epithelial cells. This is Bombesin receptor-activated protein C6orf89 homolog from Mus musculus (Mouse).